Consider the following 254-residue polypeptide: Proteasome activator complex subunit 3 (254 aa).

Alanine 2 carries the post-translational modification N-acetylalanine. Phosphoserine occurs at positions 17 and 24. Position 195 is an N6-acetyllysine; by P300/CBP (lysine 195). Residue serine 247 is modified to Phosphoserine; by CHEK2.

This sequence belongs to the PA28 family. Homoheptamer; the stability of the heptamer is essential for the specific activation of the trypsine-like subunit and inhibition of the chymotrypsin-like and postglutamyl-preferring (PGPH) subunits of the proteasome. Interacts with p53/TP53, MDM2 and MAP3K3. Associates with the proteasome. Interacts with CCAR2. Interacts with PSME3IP1 (via C-terminus); the interaction is direct and promotes the association of PSME3 with the 20S proteasome. Interacts with COIL; the interaction is inhibited by PSME3IP1. Phosphorylated by MAP3K3. Phosphorylation at Ser-247 promotes its association with CCAR2. In terms of processing, acetylation at the major site Lys-195 is important for oligomerization and ability to degrade its target substrates. Deacetylated by SIRT1.

Its subcellular location is the nucleus. The protein localises to the cytoplasm. Functionally, subunit of the 11S REG-gamma (also called PA28-gamma) proteasome regulator, a doughnut-shaped homoheptamer which associates with the proteasome. 11S REG-gamma activates the trypsin-like catalytic subunit of the proteasome but inhibits the chymotrypsin-like and postglutamyl-preferring (PGPH) subunits. Facilitates the MDM2-p53/TP53 interaction which promotes ubiquitination- and MDM2-dependent proteasomal degradation of p53/TP53, limiting its accumulation and resulting in inhibited apoptosis after DNA damage. May also be involved in cell cycle regulation. Mediates CCAR2 and CHEK2-dependent SIRT1 inhibition. In Pongo abelii (Sumatran orangutan), this protein is Proteasome activator complex subunit 3 (PSME3).